The primary structure comprises 269 residues: NAD kinase (269 aa).

Residue Asp45 is the Proton acceptor of the active site. Residues 45–46, 122–123, Arg149, Asp151, and Ala186 contribute to the NAD(+) site; these read DG and NE.

Belongs to the NAD kinase family. The cofactor is a divalent metal cation.

It localises to the cytoplasm. It carries out the reaction NAD(+) + ATP = ADP + NADP(+) + H(+). Functionally, involved in the regulation of the intracellular balance of NAD and NADP, and is a key enzyme in the biosynthesis of NADP. Catalyzes specifically the phosphorylation on 2'-hydroxyl of the adenosine moiety of NAD to yield NADP. The protein is NAD kinase of Staphylococcus saprophyticus subsp. saprophyticus (strain ATCC 15305 / DSM 20229 / NCIMB 8711 / NCTC 7292 / S-41).